The sequence spans 227 residues: MGYKFMAYGGYFLFCLFFLLMDGWRGMGICLIIVGLALLALEPYKIKAQKNIDKLKENAETLKHFDGGFNPDNFFNTYKTKIAFKESDSLVKIYQLNKDEHIEEYTIPFSNVIESEIALDNQIISKVSKSGIVAGGLLAGGIGAAIGGLSASSIQNEMVKSVTLKITVEDLGKPIHYIDFLPTQEVEGYNIQGYKKDSNVIQQALTNAEYWHGVMDVIIKKANKVAQ.

The next 2 membrane-spanning stretches (helical) occupy residues Leu-16–Leu-36 and Gly-131–Ala-151.

It localises to the cell membrane. In Bacillus subtilis (strain 168), this protein is SPbeta prophage-derived uncharacterized membrane protein YomJ (yomJ).